A 402-amino-acid polypeptide reads, in one-letter code: Deoxyguanosinetriphosphate triphosphohydrolase-like protein (402 aa).

The region spanning 69 to 217 (RLTHSLEVAQ…AAIADDIAYD (149 aa)) is the HD domain.

The protein belongs to the dGTPase family. Type 2 subfamily.

In Bradyrhizobium diazoefficiens (strain JCM 10833 / BCRC 13528 / IAM 13628 / NBRC 14792 / USDA 110), this protein is Deoxyguanosinetriphosphate triphosphohydrolase-like protein.